The primary structure comprises 457 residues: Glucuronide carrier protein homolog (457 aa).

At 1–11 the chain is on the cytoplasmic side; that stretch reads MNQQLSWRTIV. The chain crosses the membrane as a helical span at residues 12 to 34; sequence GYSLGDVANNFAFAMGALFLLSY. Over 35 to 37 the chain is Periplasmic; it reads YTD. The helical transmembrane segment at 38–60 threads the bilayer; sequence VAGVGAAAAGTMLLLVRVFDAFA. Over 61-79 the chain is Cytoplasmic; the sequence is DVFAGRVVDSVNTRWGKFR. Residues 80 to 100 traverse the membrane as a helical segment; it reads PFLLFGTAPLMIFSVLVFWVL. Over 101-108 the chain is Periplasmic; it reads TDWSHGSK. A helical transmembrane segment spans residues 109 to 129; it reads VVYAYLTYMGLGLCYSLVNIP. The Cytoplasmic portion of the chain corresponds to 130 to 146; it reads YGSLATAMTQQPQSRAR. The chain crosses the membrane as a helical span at residues 147–167; the sequence is LGAARGIAASLTFVCLAFLIG. Topologically, residues 168–180 are periplasmic; sequence PSIKNSSPEEMVS. A helical transmembrane segment spans residues 181 to 201; the sequence is VYHFWTIVLAIAGMVLYFICF. Over 202-228 the chain is Cytoplasmic; the sequence is KSTRENVVRIVAQPSLNISLQTLKRNR. A helical transmembrane segment spans residues 229-249; the sequence is PLFMLCIGALCVLISTFAVSA. The Periplasmic segment spans residues 250–263; sequence SSLFYVRYVLNDTG. The chain crosses the membrane as a helical span at residues 264–284; sequence LFTVLVLVQNLVGTVASAPLV. At 285-296 the chain is on the cytoplasmic side; it reads PGMVARIGKKNT. A helical transmembrane segment spans residues 297 to 316; that stretch reads FLIGALLGTCGYLLFFWVSV. Residues 317-320 are Periplasmic-facing; that stretch reads WSLP. Residues 321–343 traverse the membrane as a helical segment; sequence VALVALAIASIGQGVTMTVMWAL. The Cytoplasmic portion of the chain corresponds to 344–372; that stretch reads EADTVEYGEYLTGVRIEGLTYSLFSFTRK. A helical membrane pass occupies residues 373 to 393; it reads CGQAIGGSIPAFILGLSGYIA. At 394 to 408 the chain is on the periplasmic side; the sequence is NQVQTPEVIMGIRTS. Residues 409–429 traverse the membrane as a helical segment; it reads IALVPCGFMLLAFVIIWFYPL. Topologically, residues 430–457 are cytoplasmic; it reads TDKKFKEIVVEIDNRKKVQQQLISDITN.

The protein belongs to the sodium:galactoside symporter (TC 2.A.2) family.

It is found in the cell inner membrane. The sequence is that of Glucuronide carrier protein homolog (uidB) from Escherichia coli (strain K12).